The sequence spans 126 residues: Profilin-1B (126 aa).

An actin binding region spans residues 2–36; it reads SWQTYVDTNLVGTGAVTQAAILGLDGNTWATSAGF. N6,N6,N6-trimethyllysine is present on lysine 104.

The protein belongs to the profilin family. As to quaternary structure, occurs in many kinds of cells as a complex with monomeric actin in a 1:1 ratio.

The protein resides in the cytoplasm. Its subcellular location is the cytoskeleton. Binds to actin and affects the structure of the cytoskeleton. At high concentrations, profilin prevents the polymerization of actin, whereas it enhances it at low concentrations. By binding to PIP2, it inhibits the formation of IP3 and DG. This Acanthamoeba castellanii (Amoeba) protein is Profilin-1B.